Consider the following 117-residue polypeptide: Large ribosomal subunit protein uL18 (117 aa).

This sequence belongs to the universal ribosomal protein uL18 family. In terms of assembly, part of the 50S ribosomal subunit; part of the 5S rRNA/L5/L18/L25 subcomplex. Contacts the 5S and 23S rRNAs.

In terms of biological role, this is one of the proteins that bind and probably mediate the attachment of the 5S RNA into the large ribosomal subunit, where it forms part of the central protuberance. This Leuconostoc mesenteroides subsp. mesenteroides (strain ATCC 8293 / DSM 20343 / BCRC 11652 / CCM 1803 / JCM 6124 / NCDO 523 / NBRC 100496 / NCIMB 8023 / NCTC 12954 / NRRL B-1118 / 37Y) protein is Large ribosomal subunit protein uL18.